We begin with the raw amino-acid sequence, 222 residues long: Charged multivesicular body protein 4a (222 aa).

2 disordered regions span residues M1 to E21 and L177 to S222. An interaction with phosphoinosides region spans residues M1–A116. The segment at M1 to V150 is intramolecular interaction with C-terminus. Coiled coils occupy residues E20 to T105 and D155 to V180. An intramolecular interaction with N-terminus region spans residues G151–S222. Residue S196 is modified to Phosphoserine.

The protein belongs to the SNF7 family. As to quaternary structure, probable core component of the endosomal sorting required for transport complex III (ESCRT-III). ESCRT-III components are thought to multimerize to form a flat lattice on the perimeter membrane of the endosome. Several assembly forms of ESCRT-III may exist that interact and act sequentially. Self-associates; overexpression leads to the assembly of filaments that curve and associate to create circular rings. Interacts with CHMP2A. Interacts with CHMP3; the interaction requires the release of CHMP4A autoinhibition. Interacts with CHMP4B. Interacts with CHMP4C. Interacts with CHMP6. Interacts with VPS4A. Interacts with PDCD6IP; the interaction is direct.

It is found in the cytoplasmic vesicle membrane. Its subcellular location is the late endosome membrane. Its function is as follows. Probable core component of the endosomal sorting required for transport complex III (ESCRT-III) which is involved in multivesicular bodies (MVBs) formation and sorting of endosomal cargo proteins into MVBs. MVBs contain intraluminal vesicles (ILVs) that are generated by invagination and scission from the limiting membrane of the endosome and mostly are delivered to lysosomes enabling degradation of membrane proteins, such as stimulated growth factor receptors, lysosomal enzymes and lipids. The MVB pathway appears to require the sequential function of ESCRT-O, -I,-II and -III complexes. ESCRT-III proteins mostly dissociate from the invaginating membrane before the ILV is released. The ESCRT machinery also functions in topologically equivalent membrane fission events, such as the terminal stages of cytokinesis and the budding of enveloped viruses (lentiviruses). ESCRT-III proteins are believed to mediate the necessary vesicle extrusion and/or membrane fission activities, possibly in conjunction with the AAA ATPase VPS4. When overexpressed, membrane-assembled circular arrays of CHMP4A filaments can promote or stabilize negative curvature and outward budding. CHMP4A/B/C are required for the exosomal release of SDCBP, CD63 and syndecan. This Bos taurus (Bovine) protein is Charged multivesicular body protein 4a (CHMP4A).